A 191-amino-acid polypeptide reads, in one-letter code: Thymidine kinase (191 aa).

ATP-binding positions include 15 to 22 and 88 to 91; these read GPMYSGKT and DEAQ. Catalysis depends on E89, which acts as the Proton acceptor. 4 residues coordinate Zn(2+): C145, C148, C183, and C186.

Belongs to the thymidine kinase family. Homotetramer.

Its subcellular location is the cytoplasm. It carries out the reaction thymidine + ATP = dTMP + ADP + H(+). This is Thymidine kinase from Clostridium botulinum (strain Loch Maree / Type A3).